Consider the following 458-residue polypeptide: Ectonucleotide pyrophosphatase/phosphodiesterase family member 7 (458 aa).

Positions 1–21 (MRGPAVLLTVALATLLAPGAG) are cleaved as a signal peptide. Topologically, residues 22–433 (APVQSQGSQN…RPTLLPKGRS (412 aa)) are extracellular. The Zn(2+) site is built by D39 and T75. The required for enzyme activity stretch occupies residues 72–78 (VTMTSPC). The active-site Nucleophile is T75. A substrate-binding site is contributed by N96. N-linked (GlcNAc...) asparagine glycosylation is found at N100, N121, N146, and N168. Positions 199, 203, 246, and 247 each coordinate Zn(2+). N267 carries an N-linked (GlcNAc...) asparagine glycan. H353 lines the Zn(2+) pocket. A helical transmembrane segment spans residues 434–454 (ALPPSSRPLLVMGLLGTVILL). Topologically, residues 455–458 (SEVA) are cytoplasmic.

It belongs to the nucleotide pyrophosphatase/phosphodiesterase family. Zn(2+) is required as a cofactor. In terms of processing, N-glycosylated; required for activity and transport to the plasma membrane. As to expression, detected in the colon (at protein level). Expressed in the duodenum, jejunum and liver and at low levels in the ileum. Expression was very low in the esophagus, stomach and colon.

It is found in the cell membrane. It carries out the reaction a sphingomyelin + H2O = phosphocholine + an N-acylsphing-4-enine + H(+). The enzyme catalyses 1-hexadecanoyl-sn-glycero-3-phosphocholine + H2O = 1-hexadecanoyl-sn-glycerol + phosphocholine + H(+). The catalysed reaction is a 1-O-alkyl-2-acetyl-sn-glycero-3-phosphocholine + H2O = a 1-O-alkyl-2-acetyl-sn-glycerol + phosphocholine + H(+). It catalyses the reaction 1-O-octadecyl-2-acetyl-sn-glycero-3-phosphocholine + H2O = 1-O-octadecyl-2-acetyl-sn-glycerol + phosphocholine + H(+). Inhibited in a dose dependent manner by ATP, imidazole, orthovanadate and zinc ion. Not inhibited by ADP, AMP and EDTA. Its function is as follows. Choline-specific phosphodiesterase that hydrolyzes sphingomyelin releasing the ceramide and phosphocholine and therefore is involved in sphingomyelin digestion, ceramide formation, and fatty acid (FA) absorption in the gastrointestinal tract. Also has phospholipase C activity and can also cleave phosphocholine from palmitoyl lyso-phosphatidylcholine and platelet-activating factor (PAF) leading to its inactivation. Does not have nucleotide pyrophosphatase activity. May promote cholesterol absorption by affecting the levels of sphingomyelin derived from either diet or endogenous sources, in the intestinal lumen. The sequence is that of Ectonucleotide pyrophosphatase/phosphodiesterase family member 7 from Homo sapiens (Human).